The sequence spans 220 residues: Octanoyltransferase (220 aa).

Residues 36–212 (ADSPDQFWLV…CLARQLGRRL (177 aa)) form the BPL/LPL catalytic domain. Substrate contacts are provided by residues 75-82 (RGGQVTYH), 142-144 (SLG), and 155-157 (GVA). Cys-173 acts as the Acyl-thioester intermediate in catalysis.

It belongs to the LipB family.

It is found in the cytoplasm. It carries out the reaction octanoyl-[ACP] + L-lysyl-[protein] = N(6)-octanoyl-L-lysyl-[protein] + holo-[ACP] + H(+). Its pathway is protein modification; protein lipoylation via endogenous pathway; protein N(6)-(lipoyl)lysine from octanoyl-[acyl-carrier-protein]: step 1/2. Catalyzes the transfer of endogenously produced octanoic acid from octanoyl-acyl-carrier-protein onto the lipoyl domains of lipoate-dependent enzymes. Lipoyl-ACP can also act as a substrate although octanoyl-ACP is likely to be the physiological substrate. This is Octanoyltransferase from Chromohalobacter salexigens (strain ATCC BAA-138 / DSM 3043 / CIP 106854 / NCIMB 13768 / 1H11).